A 270-amino-acid polypeptide reads, in one-letter code: uncharacterized protein (270 aa).

Disordered stretches follow at residues 35–67 and 168–204; these read IKQD…GGNK and SNNN…DNSN. The segment covering 39–48 has biased composition (low complexity); it reads NNNNNNNNTN. A compositionally biased stretch (polar residues) spans 49–67; sequence VSLSPSIKSQATSSTGGNK. Residues 168-191 show a composition bias toward low complexity; that stretch reads SNNNNNNNNNNNNNNNNNNNNNNN.

This is an uncharacterized protein from Dictyostelium discoideum (Social amoeba).